We begin with the raw amino-acid sequence, 326 residues long: NAD kinase (326 aa).

Asp93 acts as the Proton acceptor in catalysis. NAD(+)-binding positions include 93–94 (DG), Arg98, 171–172 (NE), Arg182, Asp201, and 212–217 (TAHAFS).

This sequence belongs to the NAD kinase family. The cofactor is a divalent metal cation.

It localises to the cytoplasm. The catalysed reaction is NAD(+) + ATP = ADP + NADP(+) + H(+). Involved in the regulation of the intracellular balance of NAD and NADP, and is a key enzyme in the biosynthesis of NADP. Catalyzes specifically the phosphorylation on 2'-hydroxyl of the adenosine moiety of NAD to yield NADP. The chain is NAD kinase from Thermobifida fusca (strain YX).